Consider the following 248-residue polypeptide: Proteasome subunit alpha type-1 (248 aa).

This sequence belongs to the peptidase T1A family. The 26S proteasome consists of a 20S proteasome core and two 19S regulatory subunits. The 20S proteasome core is composed of 28 subunits that are arranged in four stacked rings, resulting in a barrel-shaped structure. The two end rings are each formed by seven alpha subunits, and the two central rings are each formed by seven beta subunits. The catalytic chamber with the active sites is on the inside of the barrel.

It localises to the cytoplasm. The protein resides in the nucleus. The proteasome is a multicatalytic proteinase complex which is characterized by its ability to cleave peptides with Arg, Phe, Tyr, Leu, and Glu adjacent to the leaving group at neutral or slightly basic pH. The proteasome has an ATP-dependent proteolytic activity. The sequence is that of Proteasome subunit alpha type-1 (psmA1) from Dictyostelium discoideum (Social amoeba).